Reading from the N-terminus, the 343-residue chain is Geranylgeranyl pyrophosphate synthase (343 aa).

Residues 1–12 show a composition bias toward basic and acidic residues; sequence MAYTVEPREHSK. The tract at residues 1–26 is disordered; it reads MAYTVEPREHSKNTTLPTVAMPPSPP. The isopentenyl diphosphate site is built by K69, R72, and H101. Residues D108 and D112 each contribute to the Mg(2+) site. R117 contributes to the dimethylallyl diphosphate binding site. An isopentenyl diphosphate-binding site is contributed by R118. 2 residues coordinate dimethylallyl diphosphate: T196 and Q229. D232 lines the Mg(2+) pocket. Positions 236, 246, and 256 each coordinate dimethylallyl diphosphate.

It belongs to the FPP/GGPP synthase family. Requires Mg(2+) as cofactor.

It carries out the reaction isopentenyl diphosphate + dimethylallyl diphosphate = (2E)-geranyl diphosphate + diphosphate. The enzyme catalyses isopentenyl diphosphate + (2E)-geranyl diphosphate = (2E,6E)-farnesyl diphosphate + diphosphate. It catalyses the reaction isopentenyl diphosphate + (2E,6E)-farnesyl diphosphate = (2E,6E,10E)-geranylgeranyl diphosphate + diphosphate. It functions in the pathway mycotoxin biosynthesis. Functionally, geranylgeranyl pyrophosphate synthase; part of the gene cluster that mediates the biosynthesis of aphidicolin, a specific inhibitor of eukaryotic DNA synthesis and DNA polymerase alpha. The geranylgeranyl pyrophosphate synthase GGS is required for supplying a sufficient amount of geranylgeranyl diphosphate (GGDP), the general precursor of diterpenes. The diterpene synthase ACS then catalyzes the conversion of geranylgeranyl diphosphate to aphidicolan-16-beta-ol via the intermediate syn-copalyldiphosphate (syn-CDP). In addition to aphidicolan-16-beta-ol, the enzyme also produces low levels of amphidicol-15-ene and amphidicol-16-ene. The cytochrome P450 monooxygenase P450-2 then catalyzes the two-step hydroxylation from aphidicolan-16-beta-ol to 3-deoxyaphidicolin via a 17,3-deoxyaphidicolin intermediate. Finally, the cytochrome P450 monooxygenase P450-1 converts 3-deoxyaphidicolin to aphidicolin. The polypeptide is Geranylgeranyl pyrophosphate synthase (GGS) (Neocamarosporium betae (Beet black rot fungus)).